Here is a 418-residue protein sequence, read N- to C-terminus: FAD-dependent monooxygenase fmqB (418 aa).

The FAD site is built by Val-12 and Arg-68. Residue Arg-147 is part of the active site. Asp-272 and Gly-285 together coordinate FAD.

The protein belongs to the paxM FAD-dependent monooxygenase family.

It localises to the cytoplasm. It participates in alkaloid biosynthesis. FAD-dependent monooxygenase; part of the gene cluster that mediates the biosynthesis of the antitumor fumiquinazolines that confer a dual-usage capability to defend against phagocytes in the environment and animal hosts. The simplest member is fumiquinazoline F (FQF) with a 6-6-6 tricyclic core derived from anthranilic acid (Ant), tryptophan (Trp), and alanine (Ala). The trimodular NRPS fmqA is responsible for FQF formation. Modules 1, 2 and 3 of fmqA are predicted to activate and load Ant, Trp and Ala, respectively, providing for the assembly of an Ant-Trp-Ala-S-enzyme intermediate that would undergo double cyclization for chain release and generation of the tricyclic 6-6-6 product fumiquinazoline F. The presence of an E domain predicted for module 2 of fmqA is consistent with epimerization of L-Trp to D-Trp during assembly to generate the R-stereocenter at C14 of FQF. The FAD-dependent monooxygenase fmqB and the monomodular NRPS fmqC then maturate FQF to FQA. FmqB oxidizes the 2',3'-double bond of the indole side chain of FQF, and fmqC activates L-Ala as the adenylate, installs it as the pantetheinyl thioester on its carrier protein domain, and acylates the oxidized indole for subsequent intramolecular cyclization to create the 6-5-5-imidazolindolone of FQA. The FAD-linked oxidoreductase fmqD introduces a third layer of scaffold complexity by converting FQA to the spirohemiaminal FQC, presumably by catalyzing the formation of a transient imine within the pyrazinone ring. FQC subsequently converts nonenzymatically to the known cyclic aminal FQD. The polypeptide is FAD-dependent monooxygenase fmqB (Aspergillus fumigatus (strain ATCC MYA-4609 / CBS 101355 / FGSC A1100 / Af293) (Neosartorya fumigata)).